A 479-amino-acid chain; its full sequence is MIDDFRFGRITVIGDLLLDQYISGGVSRISPEAPVPVVLHDGLRCVPGGAANVAVNAAALGAQVHLVGLVGEDDSAARLKETLKLWPTIETDGIVSSPDWTTITKTRVVSGRQQIVRIDVEKLTPLSETLQQRLVEEACRAIAVSDVLVCSDYAKGVLTDEVLRAIIAAGREKGIPVIVDPKRHTFEAYAGATLVTPNRIEAQQASGLPARTDGEVLKVAETLSGQFGGNVLVTRSEDGMTLWQHDAKPLHVASRKSEVFDVSGAGDTVVATVAAVLSAGQTLETAVVIATAAAALSVSKFGTATVSREELSRELLQEMPETGALVPVEQAARIVESWHRHGAKVVFTNGCFDLVHPGHVSLLQAAAREGDRLVVALNTDRSVSRLKGPTRPVQKEEARARVIGALRSVDLVVLFDEDTPLEVIRTLKPDILVKGADYTEDQVVGADVVKSYGGKVVLVDLVEGQSTTRLVRGMQSAPS.

Residues 1–322 (MIDDFRFGRI…RELLQEMPET (322 aa)) are ribokinase. 198–201 (NRIE) lines the ATP pocket. Aspartate 267 is an active-site residue. A cytidylyltransferase region spans residues 347–479 (FTNGCFDLVH…LVRGMQSAPS (133 aa)).

It in the N-terminal section; belongs to the carbohydrate kinase PfkB family. In the C-terminal section; belongs to the cytidylyltransferase family. In terms of assembly, homodimer.

It carries out the reaction D-glycero-beta-D-manno-heptose 7-phosphate + ATP = D-glycero-beta-D-manno-heptose 1,7-bisphosphate + ADP + H(+). The enzyme catalyses D-glycero-beta-D-manno-heptose 1-phosphate + ATP + H(+) = ADP-D-glycero-beta-D-manno-heptose + diphosphate. The protein operates within nucleotide-sugar biosynthesis; ADP-L-glycero-beta-D-manno-heptose biosynthesis; ADP-L-glycero-beta-D-manno-heptose from D-glycero-beta-D-manno-heptose 7-phosphate: step 1/4. It participates in nucleotide-sugar biosynthesis; ADP-L-glycero-beta-D-manno-heptose biosynthesis; ADP-L-glycero-beta-D-manno-heptose from D-glycero-beta-D-manno-heptose 7-phosphate: step 3/4. Catalyzes the phosphorylation of D-glycero-D-manno-heptose 7-phosphate at the C-1 position to selectively form D-glycero-beta-D-manno-heptose-1,7-bisphosphate. In terms of biological role, catalyzes the ADP transfer from ATP to D-glycero-beta-D-manno-heptose 1-phosphate, yielding ADP-D-glycero-beta-D-manno-heptose. The chain is Bifunctional protein HldE from Gluconobacter oxydans (strain 621H) (Gluconobacter suboxydans).